Reading from the N-terminus, the 1859-residue chain is Retinitis pigmentosa 1-like 1 protein (1859 aa).

2 disordered regions span residues Met-1–Arg-22 and Arg-115–Lys-154. One can recognise a Doublecortin 1 domain in the interval Lys-42 to Arg-126. A compositionally biased stretch (basic and acidic residues) spans Arg-115 to Arg-126. The segment covering Lys-130–Val-139 has biased composition (polar residues). A Doublecortin 2 domain is found at Arg-160–Glu-239. Disordered stretches follow at residues Pro-263–Arg-301, Ile-426–Trp-445, Trp-457–His-593, Met-700–Ala-750, Cys-868–Ala-920, Asn-952–Ser-997, Thr-1152–Leu-1211, Ala-1227–Leu-1255, Gly-1298–Glu-1350, and Leu-1567–Phe-1859. A compositionally biased stretch (basic and acidic residues) spans Trp-457–Leu-472. Composition is skewed to polar residues over residues Gly-499–His-512 and Pro-535–Ala-551. Low complexity predominate over residues Ser-716–Ser-728. Residues Pro-734–Ala-750 are compositionally biased toward polar residues. Over residues Gly-870–His-883 the composition is skewed to low complexity. Polar residues-rich tracts occupy residues Thr-1241 to Ser-1252, Glu-1336 to Asn-1345, and Leu-1567 to Arg-1577. A compositionally biased stretch (basic and acidic residues) spans Gly-1616–Lys-1632. A compositionally biased stretch (acidic residues) spans Pro-1641 to Glu-1652. Residues Glu-1700 to Ser-1720 show a composition bias toward basic and acidic residues. The segment covering Ser-1756–Gly-1778 has biased composition (polar residues).

As to quaternary structure, interacts with RP1; has a synergistic effect with RP1 in photoreceptor differentiation. As to expression, retinal-specific; expressed in photoreceptor.

The protein localises to the cytoplasm. The protein resides in the cytoskeleton. It localises to the cilium axoneme. It is found in the cell projection. Its subcellular location is the cilium. The protein localises to the photoreceptor outer segment. Required for the differentiation of photoreceptor cells. Plays a role in the organization of outer segment of rod and cone photoreceptors. The polypeptide is Retinitis pigmentosa 1-like 1 protein (Rp1l1) (Mus musculus (Mouse)).